The following is a 94-amino-acid chain: Integration host factor subunit beta (94 aa).

This sequence belongs to the bacterial histone-like protein family. Heterodimer of an alpha and a beta chain.

In terms of biological role, this protein is one of the two subunits of integration host factor, a specific DNA-binding protein that functions in genetic recombination as well as in transcriptional and translational control. In Histophilus somni (strain 129Pt) (Haemophilus somnus), this protein is Integration host factor subunit beta.